The primary structure comprises 463 residues: MSLSLWQQCLARLQDELPATEFSMWIRPLQAELSDNTLALYAPNRFVLDWVRDKYLNNINGLLNDFCGTDAPLLRFEVGSKPLSQIISQTVTASVSAPSAPIVRVAAPSRPSWDNAAPQPELSYRSNVNPKHTFDNFVEGKSNQLARAAARQVADNPGGAYNPLFLYGGTGLGKTHLLHAVGNGIMARKANAKVVYMHSERFVQDMVKALQNNAIEEFKRYYRSVDALLIDDIQFFANKERSQEEFFHTFNALLEGNQQIILTSDRYPKEINGVEDRLKSRFGWGLTVAIEPPELETRVAILMKKADENNIRLPGEVAFFIAKRLRSNVRELEGALNRVIANANFTGRAITIDFVREALRDLLALQEKLVTIDNIQKTVAEYYKIKIADLLSKRRSRSVARPRQMAMALAKELTNHSLPEIGDAFGGRDHTTVLHACRKIEQLREESHDIKEDFSNLIRTLSS.

A domain I, interacts with DnaA modulators region spans residues 1-90 (MSLSLWQQCL…KPLSQIISQT (90 aa)). The interval 91–126 (VTASVSAPSAPIVRVAAPSRPSWDNAAPQPELSYRS) is domain II. Residues 127 to 343 (NVNPKHTFDN…GALNRVIANA (217 aa)) form a domain III, AAA+ region region. ATP is bound by residues Gly171, Gly173, Lys174, and Thr175. Residues 344 to 463 (NFTGRAITID…FSNLIRTLSS (120 aa)) are domain IV, binds dsDNA.

The protein belongs to the DnaA family. Oligomerizes as a right-handed, spiral filament on DNA at oriC.

It is found in the cytoplasm. In terms of biological role, plays an essential role in the initiation and regulation of chromosomal replication. ATP-DnaA binds to the origin of replication (oriC) to initiate formation of the DNA replication initiation complex once per cell cycle. Binds the DnaA box (a 9 base pair repeat at the origin) and separates the double-stranded (ds)DNA. Forms a right-handed helical filament on oriC DNA; dsDNA binds to the exterior of the filament while single-stranded (ss)DNA is stabiized in the filament's interior. The ATP-DnaA-oriC complex binds and stabilizes one strand of the AT-rich DNA unwinding element (DUE), permitting loading of DNA polymerase. After initiation quickly degrades to an ADP-DnaA complex that is not apt for DNA replication. Binds acidic phospholipids. The sequence is that of Chromosomal replication initiator protein DnaA from Serratia proteamaculans (strain 568).